The following is a 124-amino-acid chain: Small ribosomal subunit protein uS13 (124 aa).

Residues 94–117 are compositionally biased toward basic residues; it reads NLPVRGQRTRTNARTRKGPRKTVA. The disordered stretch occupies residues 94 to 124; sequence NLPVRGQRTRTNARTRKGPRKTVANKKIESK.

It belongs to the universal ribosomal protein uS13 family. As to quaternary structure, part of the 30S ribosomal subunit. Forms a loose heterodimer with protein S19. Forms two bridges to the 50S subunit in the 70S ribosome.

Located at the top of the head of the 30S subunit, it contacts several helices of the 16S rRNA. In the 70S ribosome it contacts the 23S rRNA (bridge B1a) and protein L5 of the 50S subunit (bridge B1b), connecting the 2 subunits; these bridges are implicated in subunit movement. Contacts the tRNAs in the A and P-sites. The chain is Small ribosomal subunit protein uS13 from Mycoplasma pneumoniae (strain ATCC 29342 / M129 / Subtype 1) (Mycoplasmoides pneumoniae).